Consider the following 230-residue polypeptide: Small ribosomal subunit protein uS3 (230 aa).

The KH type-2 domain maps to 39–107; sequence VREYLFKRLK…PVHINIEEVR (69 aa).

It belongs to the universal ribosomal protein uS3 family. As to quaternary structure, part of the 30S ribosomal subunit. Forms a tight complex with proteins S10 and S14.

Functionally, binds the lower part of the 30S subunit head. Binds mRNA in the 70S ribosome, positioning it for translation. This chain is Small ribosomal subunit protein uS3, found in Alcanivorax borkumensis (strain ATCC 700651 / DSM 11573 / NCIMB 13689 / SK2).